The sequence spans 261 residues: Glutamate racemase (261 aa).

Residues 9–10 (DS) and 41–42 (YG) contribute to the substrate site. Catalysis depends on cysteine 73, which acts as the Proton donor/acceptor. Residue 74–75 (NT) participates in substrate binding. Cysteine 179 (proton donor/acceptor) is an active-site residue. Residue 180–181 (TH) coordinates substrate.

Belongs to the aspartate/glutamate racemases family.

It catalyses the reaction L-glutamate = D-glutamate. Its pathway is cell wall biogenesis; peptidoglycan biosynthesis. In terms of biological role, provides the (R)-glutamate required for cell wall biosynthesis. This chain is Glutamate racemase, found in Aliivibrio fischeri (strain MJ11) (Vibrio fischeri).